Here is a 384-residue protein sequence, read N- to C-terminus: MKPQQLATQKFSEHYGYSAAQTVFAPGRVNIIGEHTDYNDGFVMPCAINYGMAVSFSKRDDSVWRVYAIDIDEQDEFDLSRPIEPSEHKWANYVRGVVKYIQEKCPEFKQGADLAMTSDVPMSSGLSSSAALEISIGKTAQVLGDLPLSLAEIALIGQQAENKFVGANCGNMDQLTSALGQKDQVIMIDCRSLEITPTPVPHGYSIAIINSNVKHDLVTGEYNSRRQECEFAAKFFGVKALRDVTPAQFIERAAELQAENELAYKRAKHIISENQRVLEAVEALQAKDMVKLGQLMAGSHDSMRDDFEITIPEIDYLVELAQVAIGKNGGARMTGGGFGGCIVCLVPDEKVEHLRRIIADNYEKQTGIKETFHLCTACDGVHLI.

Position 34–37 (34–37 (EHTD)) interacts with substrate. Residue 123–129 (SSGLSSS) coordinates ATP. The Mg(2+) site is built by S129 and E161. D173 acts as the Proton acceptor in catalysis. Y222 serves as a coordination point for substrate.

Belongs to the GHMP kinase family. GalK subfamily.

The protein resides in the cytoplasm. It carries out the reaction alpha-D-galactose + ATP = alpha-D-galactose 1-phosphate + ADP + H(+). It participates in carbohydrate metabolism; galactose metabolism. Its function is as follows. Catalyzes the transfer of the gamma-phosphate of ATP to D-galactose to form alpha-D-galactose-1-phosphate (Gal-1-P). In Actinobacillus pleuropneumoniae serotype 3 (strain JL03), this protein is Galactokinase.